Here is a 173-residue protein sequence, read N- to C-terminus: Shikimate kinase (173 aa).

Position 14-19 (14-19 (GAGKST)) interacts with ATP. Residue S18 coordinates Mg(2+). Substrate-binding residues include D36, R60, and G82. Residue K120 participates in ATP binding. Residue R140 coordinates substrate.

The protein belongs to the shikimate kinase family. Monomer. Mg(2+) serves as cofactor.

The protein resides in the cytoplasm. The catalysed reaction is shikimate + ATP = 3-phosphoshikimate + ADP + H(+). It functions in the pathway metabolic intermediate biosynthesis; chorismate biosynthesis; chorismate from D-erythrose 4-phosphate and phosphoenolpyruvate: step 5/7. Functionally, catalyzes the specific phosphorylation of the 3-hydroxyl group of shikimic acid using ATP as a cosubstrate. The protein is Shikimate kinase (aroK) of Wigglesworthia glossinidia brevipalpis.